Consider the following 401-residue polypeptide: Phosphoglycerate kinase (401 aa).

Residues 21–23 (DLN), R37, 60–63 (HLGR), R119, and R152 contribute to the substrate site. Residues K203, E325, and 351 to 354 (GGDT) each bind ATP.

It belongs to the phosphoglycerate kinase family. Monomer.

The protein localises to the cytoplasm. The catalysed reaction is (2R)-3-phosphoglycerate + ATP = (2R)-3-phospho-glyceroyl phosphate + ADP. It functions in the pathway carbohydrate degradation; glycolysis; pyruvate from D-glyceraldehyde 3-phosphate: step 2/5. The chain is Phosphoglycerate kinase from Acidithiobacillus ferrooxidans (strain ATCC 23270 / DSM 14882 / CIP 104768 / NCIMB 8455) (Ferrobacillus ferrooxidans (strain ATCC 23270)).